We begin with the raw amino-acid sequence, 323 residues long: Cytochrome c biogenesis protein CcsA (323 aa).

Transmembrane regions (helical) follow at residues 9–29, 37–57, 71–91, 100–120, 145–165, 227–247, 261–275, and 288–308; these read ILTH…LITL, LYVS…GLLV, LYES…FTYF, VSAI…SGFL, MVLG…LIVI, IISL…VWAN, TWAF…IYLH, and AIVA…VNLL.

It belongs to the CcmF/CycK/Ccl1/NrfE/CcsA family. May interact with Ccs1.

Its subcellular location is the plastid. The protein localises to the chloroplast thylakoid membrane. Required during biogenesis of c-type cytochromes (cytochrome c6 and cytochrome f) at the step of heme attachment. The chain is Cytochrome c biogenesis protein CcsA from Cucumis sativus (Cucumber).